The following is a 311-amino-acid chain: Metal-staphylopine import system permease protein CntB (311 aa).

6 helical membrane passes run Ile-9–Ile-29, Leu-105–Ala-125, Val-139–Val-159, Gly-173–Phe-193, Ile-237–Ala-257, and Phe-274–Leu-294. Positions Phe-99–Ala-295 constitute an ABC transmembrane type-1 domain.

The protein belongs to the binding-protein-dependent transport system permease family. In terms of assembly, the complex is composed of two ATP-binding proteins (CntD and CntF), two transmembrane proteins (CntB and CntC) and a solute-binding protein (CntA).

It is found in the cell membrane. In terms of biological role, part of the ABC transporter complex CntABCDF (Opp1) involved in the uptake of metal in complex with the metallophore staphylopine (StP). May be involved in the import of a large array of divalent metals ions such as nickel, cobalt, zinc, copper and iron. Probably responsible for the translocation of the substrate across the membrane. The polypeptide is Metal-staphylopine import system permease protein CntB (Staphylococcus aureus (strain Mu50 / ATCC 700699)).